A 262-amino-acid chain; its full sequence is MLTLYGETFPSRLLLGTAAYPTPEILKQSIQTAQPAMITVSLRRAGSGGEAHGQGFWSLLQETGVPVLPNTAGCQSVQEAVTTAQMAREVFETDWIKLELIGDDDTLQPDVFQLVEAAEILIKDGFKVLPYCTEDLIACRRLLDAGCQALMPWAAPIGTGLGAVHAYALNVLRERLPDTPLIIDAGLGLPSQAAQVMEWGFDGVLLNTAVSRSGDPVNMARAFALAVESGRLAFEAGPVEARDKAQASTPTVGQPFWHSAEY.

Catalysis depends on K97, which acts as the Schiff-base intermediate with DXP. 1-deoxy-D-xylulose 5-phosphate contacts are provided by residues G158, 185–186, and 207–208; these read AG and NT. The interval 243–262 is disordered; the sequence is DKAQASTPTVGQPFWHSAEY.

It belongs to the ThiG family. As to quaternary structure, homotetramer. Forms heterodimers with either ThiH or ThiS.

Its subcellular location is the cytoplasm. It carries out the reaction [ThiS sulfur-carrier protein]-C-terminal-Gly-aminoethanethioate + 2-iminoacetate + 1-deoxy-D-xylulose 5-phosphate = [ThiS sulfur-carrier protein]-C-terminal Gly-Gly + 2-[(2R,5Z)-2-carboxy-4-methylthiazol-5(2H)-ylidene]ethyl phosphate + 2 H2O + H(+). Its pathway is cofactor biosynthesis; thiamine diphosphate biosynthesis. Catalyzes the rearrangement of 1-deoxy-D-xylulose 5-phosphate (DXP) to produce the thiazole phosphate moiety of thiamine. Sulfur is provided by the thiocarboxylate moiety of the carrier protein ThiS. In vitro, sulfur can be provided by H(2)S. This is Thiazole synthase from Neisseria meningitidis serogroup B (strain ATCC BAA-335 / MC58).